The following is a 142-amino-acid chain: ER-derived vesicles protein ERV15 (142 aa).

Over 1–7 (MSGTGLS) the chain is Cytoplasmic. A helical transmembrane segment spans residues 8-28 (LFVTGLILNCLNSICQIYFTI). Residues 29-55 (LYGDLEADYINSIELCKRVNRLSVPEA) are Extracellular-facing. A helical membrane pass occupies residues 56-76 (ILQAFISALFLFNGYWFVFLL). The Cytoplasmic portion of the chain corresponds to 77-114 (NVPVLAYNASKVYKKTHLLDATDIFRKLGRCKIECFLK). Residues 115-135 (LGFYLLIFFFYFYRMVTALLE) traverse the membrane as a helical segment. Topologically, residues 136–142 (NDANLIS) are extracellular.

This sequence belongs to the cornichon family.

The protein resides in the membrane. This chain is ER-derived vesicles protein ERV15 (ERV15), found in Saccharomyces cerevisiae (strain ATCC 204508 / S288c) (Baker's yeast).